A 32-amino-acid polypeptide reads, in one-letter code: Dermaseptin-8 (32 aa).

Q32 bears the Glutamine amide mark.

Expressed by the skin glands.

The protein localises to the secreted. Functionally, antimicrobial peptide, active against the Gram-positive bacterium S.aureus, and the Gram-negative bacteriun E.coli. Has hemolytic activity at 432 uM. The chain is Dermaseptin-8 from Phyllomedusa tarsius (Brownbelly leaf frog).